Here is a 284-residue protein sequence, read N- to C-terminus: MYVVSTKQMLNNAQRGGYAVPAFNIHNLETMQVVVETAANLHAPVIIAGTPGTFTHAGTENLLALVSAMAKQYHHPLAIHLDHHTKFDDIAQKVRSGVRSVMIDASHLPFAQNISRVKEVVDFCHRFDVSVEAELGQLGGQEDDVQVNEVDALYTNPAQAREFAEATGIDSLAVTIGTAHGMYASAPVLDFSRLENIRQWVNLPLVLHGASGLSTKDIQQTIKLGICKINVATELKNAFSQSLKNYLTEHPEATDPRDYLQSAKSAMRDVVSKVIADCGCEGRA.

The active-site Proton donor is the D82. 2 residues coordinate Zn(2+): H83 and H180. Position 181 (G181) interacts with dihydroxyacetone phosphate. H208 is a binding site for Zn(2+). Residues 209 to 211 (GAS) and 230 to 233 (NVAT) contribute to the dihydroxyacetone phosphate site.

It belongs to the class II fructose-bisphosphate aldolase family. TagBP aldolase GatY subfamily. In terms of assembly, forms a complex with GatZ. Requires Zn(2+) as cofactor.

It catalyses the reaction D-tagatofuranose 1,6-bisphosphate = D-glyceraldehyde 3-phosphate + dihydroxyacetone phosphate. It participates in carbohydrate metabolism; D-tagatose 6-phosphate degradation; D-glyceraldehyde 3-phosphate and glycerone phosphate from D-tagatose 6-phosphate: step 2/2. Catalytic subunit of the tagatose-1,6-bisphosphate aldolase GatYZ, which catalyzes the reversible aldol condensation of dihydroxyacetone phosphate (DHAP or glycerone-phosphate) with glyceraldehyde 3-phosphate (G3P) to produce tagatose 1,6-bisphosphate (TBP). Requires GatZ subunit for full activity and stability. Is involved in the catabolism of galactitol. The protein is D-tagatose-1,6-bisphosphate aldolase subunit GatY of Shigella flexneri serotype 5b (strain 8401).